We begin with the raw amino-acid sequence, 257 residues long: Phycoerythrobilin:ferredoxin oxidoreductase (257 aa).

This sequence belongs to the HY2 family.

It catalyses the reaction (3Z)-phycoerythrobilin + oxidized 2[4Fe-4S]-[ferredoxin] = 15,16-dihydrobiliverdin + reduced 2[4Fe-4S]-[ferredoxin] + 2 H(+). In terms of biological role, catalyzes the two-electron reduction of the C2 and C3(1) diene system of 15,16-dihydrobiliverdin. This is Phycoerythrobilin:ferredoxin oxidoreductase (pebB) from Prochlorococcus marinus (strain SARG / CCMP1375 / SS120).